A 312-amino-acid chain; its full sequence is Ribonuclease Z (312 aa).

7 residues coordinate Zn(2+): histidine 63, histidine 65, aspartate 67, histidine 68, histidine 140, aspartate 211, and histidine 269. Aspartate 67 acts as the Proton acceptor in catalysis.

The protein belongs to the RNase Z family. In terms of assembly, homodimer. Zn(2+) is required as a cofactor.

The catalysed reaction is Endonucleolytic cleavage of RNA, removing extra 3' nucleotides from tRNA precursor, generating 3' termini of tRNAs. A 3'-hydroxy group is left at the tRNA terminus and a 5'-phosphoryl group is left at the trailer molecule.. In terms of biological role, zinc phosphodiesterase, which displays some tRNA 3'-processing endonuclease activity. Probably involved in tRNA maturation, by removing a 3'-trailer from precursor tRNA. In Shouchella clausii (strain KSM-K16) (Alkalihalobacillus clausii), this protein is Ribonuclease Z.